An 873-amino-acid polypeptide reads, in one-letter code: Probable beta-glucosidase A (873 aa).

A signal peptide spans 1–19 (MRFGWLEVAALTAASVANA). 3 N-linked (GlcNAc...) asparagine glycosylation sites follow: Asn-71, Asn-222, and Asn-263. The active site involves Asp-291. Residues Asn-326, Asn-333, Asn-365, Asn-453, Asn-534, Asn-553, Asn-575, Asn-679, and Asn-725 are each glycosylated (N-linked (GlcNAc...) asparagine). The interval 731-764 (DSSDDPNYGWQDSEYIPEGARDGSPQPLLKAGGA) is disordered.

It belongs to the glycosyl hydrolase 3 family.

The protein resides in the secreted. The enzyme catalyses Hydrolysis of terminal, non-reducing beta-D-glucosyl residues with release of beta-D-glucose.. It functions in the pathway glycan metabolism; cellulose degradation. Functionally, beta-glucosidases are one of a number of cellulolytic enzymes involved in the degradation of cellulosic biomass. Catalyzes the last step releasing glucose from the inhibitory cellobiose. The protein is Probable beta-glucosidase A (bglA) of Aspergillus fumigatus (strain ATCC MYA-4609 / CBS 101355 / FGSC A1100 / Af293) (Neosartorya fumigata).